The chain runs to 418 residues: Actin-like protein 7B (418 aa).

Positions 1 to 42 (MATKNSPSPKPMGTAQGDPGEAGTLPAPEAAGIRDTGSTQLK) are disordered. Residue Ser8 is modified to Phosphoserine.

The protein belongs to the actin family. As to expression, testis specific.

It is found in the cytoplasm. The protein resides in the cytoskeleton. The sequence is that of Actin-like protein 7B (Actl7b) from Mus musculus (Mouse).